The chain runs to 70 residues: Large ribosomal subunit protein bL31 (70 aa).

C16, C18, C37, and C40 together coordinate Zn(2+).

Belongs to the bacterial ribosomal protein bL31 family. Type A subfamily. As to quaternary structure, part of the 50S ribosomal subunit. Requires Zn(2+) as cofactor.

In terms of biological role, binds the 23S rRNA. The protein is Large ribosomal subunit protein bL31 of Shewanella oneidensis (strain ATCC 700550 / JCM 31522 / CIP 106686 / LMG 19005 / NCIMB 14063 / MR-1).